The sequence spans 186 residues: Putative 5'(3')-deoxyribonucleotidase (186 aa).

This sequence belongs to the 5'(3')-deoxyribonucleotidase family. Mg(2+) is required as a cofactor.

In terms of biological role, dephosphorylates the 5' and 2'(3')-phosphates of deoxyribonucleotides. This chain is Putative 5'(3')-deoxyribonucleotidase, found in Bordetella parapertussis (strain 12822 / ATCC BAA-587 / NCTC 13253).